The following is a 47-amino-acid chain: Protein PsbN (47 aa).

Residues 9 to 31 (YSLLIAMVTITFGLTGYGLYTAF) form a helical membrane-spanning segment.

Belongs to the PsbN family.

It localises to the cellular thylakoid membrane. May play a role in photosystem I and II biogenesis. The protein is Protein PsbN of Prochlorococcus marinus (strain MIT 9303).